Here is a 114-residue protein sequence, read N- to C-terminus: Small nuclear ribonucleoprotein SmD1a (114 aa).

Residues 2–74 form the Sm domain; the sequence is KLVRFLMKLN…IRYYILPDSL (73 aa). The disordered stretch occupies residues 87–114; it reads VKPKKPVAGKAVGRGRGRGRGRGRGRGR. Repeat copies occupy residues 99-100, 101-102, 103-104, 105-106, 107-108, 109-110, 111-112, and 113-114. Residues 99–114 form an 8 X 2 AA tandem repeats of G-R region; it reads GRGRGRGRGRGRGRGR.

The protein belongs to the snRNP core protein family.

The protein resides in the nucleus. It is found in the nucleus speckle. Its subcellular location is the nucleolus. Its function is as follows. Involved in splicing regulation. Facilitates post-transcriptional gene silencing (PTGS) by limiting the degradation of transgene aberrant RNAs by the RNA quality control (RQC) machinery, thus favoring their entry into cytoplasmic siRNA bodies where they can trigger PTGS. Does not participate in the production of small RNAs. The polypeptide is Small nuclear ribonucleoprotein SmD1a (Arabidopsis thaliana (Mouse-ear cress)).